Consider the following 618-residue polypeptide: Structural protein ORF618 (618 aa).

Residues 570 to 598 (ILEAKRQIEDRAKGLSKNLDNTVTEIMNA) adopt a coiled-coil conformation.

The protein resides in the virion. The sequence is that of Structural protein ORF618 from Acidianus two-tailed virus (ATV).